The chain runs to 164 residues: UPF0114 protein YqhA (164 aa).

The next 3 membrane-spanning stretches (helical) occupy residues 15–35, 53–73, and 136–156; these read LLAP…LKFF, LILV…LVMV, and LMWY…MGYL.

This sequence belongs to the UPF0114 family.

Its subcellular location is the cell membrane. In Salmonella dublin (strain CT_02021853), this protein is UPF0114 protein YqhA.